The sequence spans 94 residues: Acylphosphatase (94 aa).

The region spanning 6 to 92 (RVHVWIRGRV…EGLPTFEIRP (87 aa)) is the Acylphosphatase-like domain. Active-site residues include R21 and N39.

This sequence belongs to the acylphosphatase family.

The catalysed reaction is an acyl phosphate + H2O = a carboxylate + phosphate + H(+). This chain is Acylphosphatase (acyP), found in Synechococcus sp. (strain JA-2-3B'a(2-13)) (Cyanobacteria bacterium Yellowstone B-Prime).